The primary structure comprises 763 residues: Actin filament-associated protein 1-like 1 (763 aa).

Positions 83–137 are disordered; it reads LQDMPEDEAESCKAASPEPAKSPSLRHTADLPPPLPNRPPPEDYYEEALPLGPGK. Residues S98, S104, and S153 each carry the phosphoserine modification. Residues 169–210 form a disordered region; it reads TRMNGELKNSYNDSDAMSSSYESYDEEEEEGKGPQPTHQWPS. The segment covering 175 to 185 has biased composition (polar residues); it reads LKNSYNDSDAM. Residues 220 to 316 form the PH 1 domain; the sequence is DCRICAFLLR…WLKVIREVSK (97 aa). S329 and S343 each carry phosphoserine. Positions 343–380 are disordered; the sequence is SQEKQTSDSDSLGMGDSCSTLGREHGKGKKSSLSELKG. The PH 2 domain occupies 413–507; it reads EVPCCGYLNV…WLGLLLVEMG (95 aa). Position 552 is a phosphotyrosine (Y552). A disordered region spans residues 561 to 604; the sequence is QDEEPERPPGAQVKRHASTCSEKSHRVDPQVKVKRHASSAHQYK. Over residues 582 to 591 the composition is skewed to basic and acidic residues; the sequence is EKSHRVDPQV. The stretch at 606-694 forms a coiled coil; it reads GKNRAEEDAR…LVTVKERLQQ (89 aa). Positions 712 to 724 are enriched in polar residues; the sequence is SGETANKPQNNVP. The disordered stretch occupies residues 712–763; it reads SGETANKPQNNVPEQPLPVNCVSELRKRSPSIINSNQGRVLQKAKEWEMKKT. A Phosphoserine modification is found at S742. Residues 754–763 show a composition bias toward basic and acidic residues; it reads KAKEWEMKKT.

In terms of assembly, interacts with CTTN.

Its subcellular location is the cytoplasm. It localises to the cell projection. The protein resides in the podosome. It is found in the invadopodium. The protein localises to the cytoskeleton. Its subcellular location is the stress fiber. Its function is as follows. May be involved in podosome and invadosome formation. This is Actin filament-associated protein 1-like 1 (AFAP1L1) from Bos taurus (Bovine).